Here is a 158-residue protein sequence, read N- to C-terminus: Ribosome maturation factor RimP (158 aa).

The protein belongs to the RimP family.

It is found in the cytoplasm. In terms of biological role, required for maturation of 30S ribosomal subunits. This is Ribosome maturation factor RimP from Lactobacillus helveticus (strain DPC 4571).